Here is a 44-residue protein sequence, read N- to C-terminus: MGCKACGTNCQCSATKCGDNCACSQQCQCSCKNGPKDKCCSTKN.

The protein belongs to the metallothionein superfamily. Type 5 family.

Its function is as follows. This protein binds cations of several transition elements. Thought to be involved in metal ion homeostasis. The sequence is that of Metallothionein-4 (MtnD) from Drosophila melanogaster (Fruit fly).